We begin with the raw amino-acid sequence, 133 residues long: Snaclec A9 (133 aa).

3 cysteine pairs are disulfide-bonded: Cys4–Cys15, Cys32–Cys131, and Cys106–Cys123. Positions 11-132 constitute a C-type lectin domain; it reads YEGHCYKVFN…CGQPYRFTCE (122 aa).

It belongs to the snaclec family. As to quaternary structure, heterodimer; disulfide-linked. As to expression, expressed by the venom gland.

It is found in the secreted. In terms of biological role, interferes with one step of hemostasis (modulation of platelet aggregation, or coagulation cascade, for example). This chain is Snaclec A9, found in Macrovipera lebetinus (Levantine viper).